The primary structure comprises 284 residues: Formamidopyrimidine-DNA glycosylase (284 aa).

Proline 2 functions as the Schiff-base intermediate with DNA in the catalytic mechanism. Residue glutamate 3 is the Proton donor of the active site. Lysine 58 (proton donor; for beta-elimination activity) is an active-site residue. Residues histidine 101, arginine 120, and arginine 163 each contribute to the DNA site. The segment at 248-284 (RVYDRENAPCVTAGCPDVVRRVVQSGRSSFYCPSCQR) adopts an FPG-type zinc-finger fold. The Proton donor; for delta-elimination activity role is filled by arginine 274.

It belongs to the FPG family. In terms of assembly, monomer. It depends on Zn(2+) as a cofactor.

It catalyses the reaction Hydrolysis of DNA containing ring-opened 7-methylguanine residues, releasing 2,6-diamino-4-hydroxy-5-(N-methyl)formamidopyrimidine.. The enzyme catalyses 2'-deoxyribonucleotide-(2'-deoxyribose 5'-phosphate)-2'-deoxyribonucleotide-DNA = a 3'-end 2'-deoxyribonucleotide-(2,3-dehydro-2,3-deoxyribose 5'-phosphate)-DNA + a 5'-end 5'-phospho-2'-deoxyribonucleoside-DNA + H(+). In terms of biological role, involved in base excision repair of DNA damaged by oxidation or by mutagenic agents. Acts as a DNA glycosylase that recognizes and removes damaged bases. Has a preference for oxidized purines, such as 7,8-dihydro-8-oxoguanine (8-oxoG). Has AP (apurinic/apyrimidinic) lyase activity and introduces nicks in the DNA strand. Cleaves the DNA backbone by beta-delta elimination to generate a single-strand break at the site of the removed base with both 3'- and 5'-phosphates. The chain is Formamidopyrimidine-DNA glycosylase from Dinoroseobacter shibae (strain DSM 16493 / NCIMB 14021 / DFL 12).